The chain runs to 169 residues: Large ribosomal subunit protein uL10 (169 aa).

It belongs to the universal ribosomal protein uL10 family. As to quaternary structure, part of the ribosomal stalk of the 50S ribosomal subunit. The N-terminus interacts with L11 and the large rRNA to form the base of the stalk. The C-terminus forms an elongated spine to which L12 dimers bind in a sequential fashion forming a multimeric L10(L12)X complex.

In terms of biological role, forms part of the ribosomal stalk, playing a central role in the interaction of the ribosome with GTP-bound translation factors. This chain is Large ribosomal subunit protein uL10, found in Rickettsia africae (strain ESF-5).